Consider the following 366-residue polypeptide: Chorismate synthase (366 aa).

Residues Arg48 and Arg54 each coordinate NADP(+). Residues 125–127 (RSS), 242–243 (NA), Gly287, 302–306 (KPTSS), and Arg328 contribute to the FMN site.

Belongs to the chorismate synthase family. In terms of assembly, homotetramer. It depends on FMNH2 as a cofactor.

It catalyses the reaction 5-O-(1-carboxyvinyl)-3-phosphoshikimate = chorismate + phosphate. It functions in the pathway metabolic intermediate biosynthesis; chorismate biosynthesis; chorismate from D-erythrose 4-phosphate and phosphoenolpyruvate: step 7/7. Functionally, catalyzes the anti-1,4-elimination of the C-3 phosphate and the C-6 proR hydrogen from 5-enolpyruvylshikimate-3-phosphate (EPSP) to yield chorismate, which is the branch point compound that serves as the starting substrate for the three terminal pathways of aromatic amino acid biosynthesis. This reaction introduces a second double bond into the aromatic ring system. This Rhodospirillum rubrum (strain ATCC 11170 / ATH 1.1.1 / DSM 467 / LMG 4362 / NCIMB 8255 / S1) protein is Chorismate synthase.